The following is a 293-amino-acid chain: Ribosomal protein L11 methyltransferase (293 aa).

S-adenosyl-L-methionine is bound by residues threonine 145, glycine 166, aspartate 188, and asparagine 230.

The protein belongs to the methyltransferase superfamily. PrmA family.

The protein localises to the cytoplasm. It catalyses the reaction L-lysyl-[protein] + 3 S-adenosyl-L-methionine = N(6),N(6),N(6)-trimethyl-L-lysyl-[protein] + 3 S-adenosyl-L-homocysteine + 3 H(+). Its function is as follows. Methylates ribosomal protein L11. The polypeptide is Ribosomal protein L11 methyltransferase (Shewanella baltica (strain OS185)).